The primary structure comprises 483 residues: Serine hydroxymethyltransferase, cytosolic (483 aa).

Residue Lys-257 is modified to N6-(pyridoxal phosphate)lysine.

It belongs to the SHMT family. As to quaternary structure, homotetramer. Identified in complex with ABRAXAS2 and the other subunits of the BRISC complex, at least composed of ABRAXAS2, BRCC3/BRCC36, BABAM2 and BABAM1/NBA1. Pyridoxal 5'-phosphate serves as cofactor.

The protein localises to the cytoplasm. The catalysed reaction is (6R)-5,10-methylene-5,6,7,8-tetrahydrofolate + glycine + H2O = (6S)-5,6,7,8-tetrahydrofolate + L-serine. Its pathway is one-carbon metabolism; tetrahydrofolate interconversion. Functionally, interconversion of serine and glycine. The protein is Serine hydroxymethyltransferase, cytosolic (SHMT1) of Pongo abelii (Sumatran orangutan).